The following is a 150-amino-acid chain: 15 kDa calcium-binding protein (150 aa).

The residue at position 1 (Ala-1) is an N-acetylalanine. 4 consecutive EF-hand domains span residues 7–42, 43–78, 81–116, and 118–150; these read TDAE…AGKS, FSEE…KMMK, WKKS…RIEP, and MSKE…IKSS. Positions 22, 24, 26, 28, 56, 58, 60, 62, 67, 94, 96, 98, 105, 131, 133, 135, 137, and 142 each coordinate Ca(2+).

The protein resides in the nucleus. The protein localises to the cytoplasm. It localises to the cytoskeleton. It is found in the spindle. Functionally, may play an important role in mitosis of sea urchin egg. May function as a Ca(2+)-dependent intracellular modulator of microtubule assembly. This is 15 kDa calcium-binding protein from Hemicentrotus pulcherrimus (Sea urchin).